Reading from the N-terminus, the 176-residue chain is Peptide methionine sulfoxide reductase MsrA (176 aa).

Cys10 is an active-site residue.

Belongs to the MsrA Met sulfoxide reductase family.

It carries out the reaction L-methionyl-[protein] + [thioredoxin]-disulfide + H2O = L-methionyl-(S)-S-oxide-[protein] + [thioredoxin]-dithiol. It catalyses the reaction [thioredoxin]-disulfide + L-methionine + H2O = L-methionine (S)-S-oxide + [thioredoxin]-dithiol. Has an important function as a repair enzyme for proteins that have been inactivated by oxidation. Catalyzes the reversible oxidation-reduction of methionine sulfoxide in proteins to methionine. The polypeptide is Peptide methionine sulfoxide reductase MsrA (Chromobacterium violaceum (strain ATCC 12472 / DSM 30191 / JCM 1249 / CCUG 213 / NBRC 12614 / NCIMB 9131 / NCTC 9757 / MK)).